Here is a 232-residue protein sequence, read N- to C-terminus: Uridylate kinase (232 aa).

13–14 (GS) provides a ligand contact to ATP. Gly52 contributes to the UMP binding site. Residues Gly53 and Arg57 each contribute to the ATP site. Residues Asp74 and 122–128 (LQPGQST) each bind UMP. ATP contacts are provided by Thr147, Tyr153, and Asp156.

This sequence belongs to the UMP kinase family. Homohexamer.

The protein resides in the cytoplasm. The enzyme catalyses UMP + ATP = UDP + ADP. It participates in pyrimidine metabolism; CTP biosynthesis via de novo pathway; UDP from UMP (UMPK route): step 1/1. Its activity is regulated as follows. Inhibited by UTP. In terms of biological role, catalyzes the reversible phosphorylation of UMP to UDP. In Thermofilum pendens (strain DSM 2475 / Hrk 5), this protein is Uridylate kinase.